Consider the following 419-residue polypeptide: Enolase (419 aa).

Gln160 contacts (2R)-2-phosphoglycerate. The active-site Proton donor is the Glu204. The Mg(2+) site is built by Asp240, Glu283, and Asp309. Residues Lys334, Arg363, Ser364, and Lys385 each coordinate (2R)-2-phosphoglycerate. The active-site Proton acceptor is Lys334.

This sequence belongs to the enolase family. It depends on Mg(2+) as a cofactor.

It localises to the cytoplasm. Its subcellular location is the secreted. The protein resides in the cell surface. The catalysed reaction is (2R)-2-phosphoglycerate = phosphoenolpyruvate + H2O. It functions in the pathway carbohydrate degradation; glycolysis; pyruvate from D-glyceraldehyde 3-phosphate: step 4/5. In terms of biological role, catalyzes the reversible conversion of 2-phosphoglycerate (2-PG) into phosphoenolpyruvate (PEP). It is essential for the degradation of carbohydrates via glycolysis. The sequence is that of Enolase from Pyrobaculum aerophilum (strain ATCC 51768 / DSM 7523 / JCM 9630 / CIP 104966 / NBRC 100827 / IM2).